A 351-amino-acid polypeptide reads, in one-letter code: MKQQLNQLAAYQPGLSPQALKEKHGIEGELYKLASNENLYGPSPKAKQAVQAHLDELFYYPETGSPSLRKAISEHLNVDPSRILFGAGLDEVILMISRAVLTPGDKIVTSEGTFGQYYHNAIVESAEVVQVPLLNGGFDLENIIKEVDEETALVWLCNPNNPTGTYFNHDELESFLERVPSHVPVLIDEAYFEFVTAEDYPDTLKLQERFDNAFLLRTFSKAYGLAGLRVGYVVATNEAIEKWNIIRPPFNVTRISEYAAIAALEDQAYLKDVTAKNAKEREKFFEIPQSEHFLPSQTNFVFVVTEKAQELYEALLKVGCITRPFPTGVRITIGFPEQNDRMIEVLKHFDY.

Lysine 221 carries the post-translational modification N6-(pyridoxal phosphate)lysine.

The protein belongs to the class-II pyridoxal-phosphate-dependent aminotransferase family. Histidinol-phosphate aminotransferase subfamily. Homodimer. Requires pyridoxal 5'-phosphate as cofactor.

The catalysed reaction is L-histidinol phosphate + 2-oxoglutarate = 3-(imidazol-4-yl)-2-oxopropyl phosphate + L-glutamate. Its pathway is amino-acid biosynthesis; L-histidine biosynthesis; L-histidine from 5-phospho-alpha-D-ribose 1-diphosphate: step 7/9. The polypeptide is Histidinol-phosphate aminotransferase (Staphylococcus haemolyticus (strain JCSC1435)).